Consider the following 596-residue polypeptide: Membrane protein insertase YidC (596 aa).

6 helical membrane passes run 4–24, 332–352, 359–379, 425–445, 468–488, and 518–538; these read NKLI…HFFD, LGWP…FSFI, YGLV…PLSY, LSGC…FNFF, IINL…FTLL, and PITF…YYFV. The segment covering 565 to 584 has biased composition (basic and acidic residues); sequence KNKEKSANNKEGSFKKRFQD. Residues 565–596 are disordered; that stretch reads KNKEKSANNKEGSFKKRFQDAIKASASHKGKK.

Belongs to the OXA1/ALB3/YidC family. Type 1 subfamily. In terms of assembly, interacts with the Sec translocase complex via SecD. Specifically interacts with transmembrane segments of nascent integral membrane proteins during membrane integration.

The protein localises to the cell inner membrane. In terms of biological role, required for the insertion and/or proper folding and/or complex formation of integral membrane proteins into the membrane. Involved in integration of membrane proteins that insert both dependently and independently of the Sec translocase complex, as well as at least some lipoproteins. Aids folding of multispanning membrane proteins. This Amoebophilus asiaticus (strain 5a2) protein is Membrane protein insertase YidC.